The sequence spans 557 residues: Vacuolar protein sorting-associated protein 30 (557 aa).

Disordered regions lie at residues 93–149 and 218–238; these read DDDN…ENQQ and NKEI…SEKE. Residues 135 to 147 are compositionally biased toward acidic residues; it reads DEEEQEATDEDEN. The residue at position 142 (Thr-142) is a Phosphothreonine. Residues 189 to 322 are a coiled coil; it reads LINRLKSEYD…QLDKLRKINI (134 aa). The BARA stretch occupies residues 320 to 539; it reads INIFNATFKI…LAFSSNLLSK (220 aa). A required for membrane-association, autophagic function during starvation and normal autophagosome morphology region spans residues 515-540; the sequence is WTTAMKFLLTNVKWLLAFSSNLLSKS.

This sequence belongs to the beclin family. In terms of assembly, component of the autophagy-specific VPS34 PI3-kinase complex I composed of VPS15, VPS30, VPS34, ATG14 and ATG38; and of the VPS34 PI3-kinase complex II composed of VPS15, VPS30, VPS34 and VPS38.

Its subcellular location is the endosome membrane. It localises to the vacuole membrane. The protein localises to the preautophagosomal structure membrane. Its function is as follows. Required for cytoplasm to vacuole transport (Cvt), autophagy, nucleophagy, and mitophagy, as a part of the autophagy-specific VPS34 PI3-kinase complex I. This complex is essential to recruit the ATG8-phosphatidylinositol conjugate and the ATG12-ATG5 conjugate to the pre-autophagosomal structure. Also involved in endosome-to-Golgi retrograde transport as part of the VPS34 PI3-kinase complex II. This second complex is required for the endosome-to-Golgi retrieval of PEP1 and KEX2, and the recruitment of VPS5 and VPS7, two components of the retromer complex, to endosomal membranes (probably through the synthesis of a specific pool of phosphatidylinositol 3-phosphate recruiting the retromer to the endosomes). Also plays a role in regulation of filamentous growth. This is Vacuolar protein sorting-associated protein 30 from Saccharomyces cerevisiae (strain ATCC 204508 / S288c) (Baker's yeast).